The chain runs to 195 residues: MKIYRVLVHLSFVLGMFTKTNTVLAWSKYDLVHGFMRVANISSIMRLDCLPNLLSSNAGYAALPSDDIPTGIFIKVNCSIPEFILWYEQKAMAAWINPIMGTVLMMNDVLKSGLENSVKVGLLTFLKRIAEKGPNGPLRNRGSGCINLIAPADISCYGSTRLDRFNRDFEDDSRGMPCRAKAMRRTTSGSRRANA.

The signal sequence occupies residues methionine 1–alanine 25. Positions lysine 28 to tyrosine 157 are interaction with gH. Positions lysine 28–alanine 195 constitute a gL alphaherpesvirus-type domain. 2 disulfide bridges follow: cysteine 49-cysteine 78 and cysteine 156-cysteine 178.

Belongs to the herpesviridae glycoprotein L (gL) family. Alphaherpesvirinae gL subfamily. Interacts with glycoprotein H (gH); this interaction is necessary for the correct processing and cell surface expression of gH. The heterodimer gH/gL seems to interact with gB trimers during fusion.

The protein resides in the virion membrane. It localises to the host cell membrane. Its subcellular location is the host Golgi apparatus. The protein localises to the host trans-Golgi network. The heterodimer glycoprotein H-glycoprotein L is required for the fusion of viral and plasma membranes leading to virus entry into the host cell. Acts as a functional inhibitor of gH and maintains gH in an inhibited form. Upon binding to host integrins, gL dissociates from gH leading to activation of the viral fusion glycoproteins gB and gH. The sequence is that of Envelope glycoprotein L from Gallus gallus (Chicken).